Reading from the N-terminus, the 389-residue chain is F-box protein At3g19880 (389 aa).

The region spanning 2 to 49 (TMMSDLTQDLVEEILSRVPITSLGAVRSTCKGWNALSKERILCIGEPK) is the F-box domain.

This Arabidopsis thaliana (Mouse-ear cress) protein is F-box protein At3g19880.